A 491-amino-acid chain; its full sequence is Glutamyl-tRNA(Gln) amidotransferase subunit A (491 aa).

Catalysis depends on charge relay system residues Lys-79 and Ser-158. Ser-182 functions as the Acyl-ester intermediate in the catalytic mechanism.

The protein belongs to the amidase family. GatA subfamily. As to quaternary structure, heterotrimer of A, B and C subunits.

The enzyme catalyses L-glutamyl-tRNA(Gln) + L-glutamine + ATP + H2O = L-glutaminyl-tRNA(Gln) + L-glutamate + ADP + phosphate + H(+). Allows the formation of correctly charged Gln-tRNA(Gln) through the transamidation of misacylated Glu-tRNA(Gln) in organisms which lack glutaminyl-tRNA synthetase. The reaction takes place in the presence of glutamine and ATP through an activated gamma-phospho-Glu-tRNA(Gln). The polypeptide is Glutamyl-tRNA(Gln) amidotransferase subunit A (Anaplasma phagocytophilum (strain HZ)).